Consider the following 380-residue polypeptide: Erythronate-4-phosphate dehydrogenase (380 aa).

Substrate is bound by residues Ser-45 and Thr-66. Cysteines 65 and 90 form a disulfide. Residues 126–127 (QV), Asp-146, Thr-175, 206–208 (ASR), and Asp-232 each bind NAD(+). The active site involves Arg-208. Glu-237 is an active-site residue. His-254 serves as the catalytic Proton donor. Gly-257 contacts NAD(+). Substrate is bound at residue Tyr-258.

This sequence belongs to the D-isomer specific 2-hydroxyacid dehydrogenase family. PdxB subfamily. In terms of assembly, homodimer.

It is found in the cytoplasm. It carries out the reaction 4-phospho-D-erythronate + NAD(+) = (R)-3-hydroxy-2-oxo-4-phosphooxybutanoate + NADH + H(+). It participates in cofactor biosynthesis; pyridoxine 5'-phosphate biosynthesis; pyridoxine 5'-phosphate from D-erythrose 4-phosphate: step 2/5. Catalyzes the oxidation of erythronate-4-phosphate to 3-hydroxy-2-oxo-4-phosphonooxybutanoate. The protein is Erythronate-4-phosphate dehydrogenase of Pseudomonas aeruginosa (strain ATCC 15692 / DSM 22644 / CIP 104116 / JCM 14847 / LMG 12228 / 1C / PRS 101 / PAO1).